The following is a 72-amino-acid chain: Translation initiation factor IF-1 (72 aa).

In terms of domain architecture, S1-like spans 1 to 72 (MAKEEAIEVE…TRGRITYREK (72 aa)).

This sequence belongs to the IF-1 family. As to quaternary structure, component of the 30S ribosomal translation pre-initiation complex which assembles on the 30S ribosome in the order IF-2 and IF-3, IF-1 and N-formylmethionyl-tRNA(fMet); mRNA recruitment can occur at any time during PIC assembly.

The protein localises to the cytoplasm. One of the essential components for the initiation of protein synthesis. Stabilizes the binding of IF-2 and IF-3 on the 30S subunit to which N-formylmethionyl-tRNA(fMet) subsequently binds. Helps modulate mRNA selection, yielding the 30S pre-initiation complex (PIC). Upon addition of the 50S ribosomal subunit IF-1, IF-2 and IF-3 are released leaving the mature 70S translation initiation complex. This is Translation initiation factor IF-1 from Syntrophotalea carbinolica (strain DSM 2380 / NBRC 103641 / GraBd1) (Pelobacter carbinolicus).